The primary structure comprises 146 residues: Ecotin-like protein 1 (146 aa).

It belongs to the protease inhibitor I11 (ecotin) family.

The polypeptide is Ecotin-like protein 1 (ISP1) (Leishmania infantum).